An 875-amino-acid chain; its full sequence is Metal transporter CNNM2 (875 aa).

Residues 1 to 250 (MIGCGACEPE…TKMIVGEEKK (250 aa)) are Extracellular-facing. The N-linked (GlcNAc...) asparagine glycan is linked to Asn-112. Positions 122–148 (EHERRRHTPGERGLGGPAPPEPDSGPQ) are disordered. Residues 251-271 (FLLPFWLQVIFISLLLCLSGM) form a helical membrane-spanning segment. Residues 251–431 (FLLPFWLQVI…DPYNDLVKEE (181 aa)) enclose the CNNM transmembrane domain. Residues 272 to 313 (FSGLNLGLMALDPMELRIVQNCGTEKEKNYAKRIEPVRRQGN) lie on the Cytoplasmic side of the membrane. The helical intramembrane region spans 314 to 334 (YLLCSLLLGNVLVNTTLTILL). The Cytoplasmic portion of the chain corresponds to 335–338 (DDIA). Residues 339–359 (GSGLVAVVVSTIGIVIFGEIV) traverse the membrane as a helical segment. The Extracellular segment spans residues 360–368 (PQAICSRHG). A helical transmembrane segment spans residues 369 to 389 (LAVGANTIFLTKFFMMMTFPA). Residues 390–875 (SYPVSKLLDC…NHSLHSEGAI (486 aa)) lie on the Cytoplasmic side of the membrane. CBS domains are found at residues 450-511 (MTPL…CTPL) and 518-584 (YNHP…ILDE). The interval 741-763 (AGSPGENKSPPRPCGLNHSDSLS) is disordered. A Phosphoserine modification is found at Ser-761.

It belongs to the ACDP family.

The protein resides in the cell membrane. Functionally, divalent metal cation transporter. Mediates transport of divalent metal cations in an order of Mg(2+) &gt; Co(2+) &gt; Mn(2+) &gt; Sr(2+) &gt; Ba(2+) &gt; Cu(2+) &gt; Fe(2+). The chain is Metal transporter CNNM2 (Cnnm2) from Rattus norvegicus (Rat).